A 401-amino-acid polypeptide reads, in one-letter code: MAKLTVEDLDLAGKKVLMRVDFNVPIKDGVVGDDNRIVAALPTIKYVLDHQGKAILFSHLGRIKKEDDKPGLSMRPVAERLSNLLNMPVTFVPVTEGPQLEDAIAKMEDGQVLVVQNTRYEDVKDGEYVKRESGNDPELGKYWASLGDLFINDAFGTAHRKHASNVGIASNMPGKAAAGFLMEKEIKFLGDAVTNPVRPFVAILGGAKVSDKIGVINNLLDKADKVIVGGGMTYTFYAAKGIKIGNSLVEEDKIDVAKEILEKAGDKLVLPVDNVVADKFANDANTKVVEGDIDDGWMALDIGPKSIEEFKKVLADAKTVVWNGPMGVFEMSNFAKGTLEVGQFLGTLEGATTIVGGGDSTAAAKQLGISDKLTHISTGGGASLAYLEGDVLPGIAAISDK.

Substrate-binding positions include 21–23, R36, 59–62, R119, and R160; these read DFN and HLGR. ATP contacts are provided by residues K212, E330, and 357–360; that span reads GGDS.

The protein belongs to the phosphoglycerate kinase family. In terms of assembly, monomer.

The protein resides in the cytoplasm. The enzyme catalyses (2R)-3-phosphoglycerate + ATP = (2R)-3-phospho-glyceroyl phosphate + ADP. It functions in the pathway carbohydrate degradation; glycolysis; pyruvate from D-glyceraldehyde 3-phosphate: step 2/5. The protein is Phosphoglycerate kinase of Limosilactobacillus fermentum (strain NBRC 3956 / LMG 18251) (Lactobacillus fermentum).